A 348-amino-acid chain; its full sequence is tRNA (cytosine(34)-C(5))-methyltransferase, mitochondrial (348 aa).

S-adenosyl-L-methionine is bound by residues 139–145, glutamate 162, aspartate 193, and aspartate 211; that span reads CAAPGGK. Cysteine 265 functions as the Nucleophile in the catalytic mechanism.

The protein belongs to the class I-like SAM-binding methyltransferase superfamily. RsmB/NOP family.

Its subcellular location is the mitochondrion matrix. The enzyme catalyses cytidine(34) in mitochondrial tRNA + S-adenosyl-L-methionine = 5-methylcytidine(34) in mitochondrial tRNA + S-adenosyl-L-homocysteine + H(+). In terms of biological role, mitochondrial tRNA methyltransferase that mediates methylation of cytosine to 5-methylcytosine (m5C) at position 34 of mt-tRNA(Met). mt-tRNA(Met) methylation at cytosine(34) takes place at the wobble position of the anticodon and initiates the formation of 5-formylcytosine (f(5)c) at this position. mt-tRNA(Met) containing the f(5)c modification at the wobble position enables recognition of the AUA codon in addition to the AUG codon, expanding codon recognition in mitochondrial translation. The chain is tRNA (cytosine(34)-C(5))-methyltransferase, mitochondrial from Mus musculus (Mouse).